The primary structure comprises 492 residues: Alpha-amylase-related protein (492 aa).

Residues 1-18 form the signal peptide; that stretch reads MRLSLSVLLCLGLALTLA. Gln19 carries the post-translational modification Pyrrolidone carboxylic acid. A disulfide bridge links Cys46 with Cys102. Ca(2+)-binding residues include Asn116, Gln167, and Asp176. The cysteines at positions 155 and 169 are disulfide-linked. Arg204 lines the chloride pocket. The active-site Nucleophile is the Asp206. His210 lines the Ca(2+) pocket. Residue Glu243 is the Proton donor of the active site. The chloride site is built by Asn306 and Arg341. 3 disulfides stabilise this stretch: Cys374–Cys380, Cys416–Cys439, and Cys446–Cys458.

This sequence belongs to the glycosyl hydrolase 13 family. As to quaternary structure, monomer. The cofactor is Ca(2+). It depends on chloride as a cofactor.

Its subcellular location is the secreted. It carries out the reaction Endohydrolysis of (1-&gt;4)-alpha-D-glucosidic linkages in polysaccharides containing three or more (1-&gt;4)-alpha-linked D-glucose units.. The protein is Alpha-amylase-related protein (Amyrel) of Drosophila willistoni (Fruit fly).